The primary structure comprises 222 residues: Phosphoribosylformylglycinamidine synthase subunit PurQ (222 aa).

Residues 3–222 (SAVVLLPGLN…LFEGALGIAA (220 aa)) form the Glutamine amidotransferase type-1 domain. Residue Cys86 is the Nucleophile of the active site. Catalysis depends on residues His196 and Glu198.

In terms of assembly, part of the FGAM synthase complex composed of 1 PurL, 1 PurQ and 2 PurS subunits.

It localises to the cytoplasm. It catalyses the reaction N(2)-formyl-N(1)-(5-phospho-beta-D-ribosyl)glycinamide + L-glutamine + ATP + H2O = 2-formamido-N(1)-(5-O-phospho-beta-D-ribosyl)acetamidine + L-glutamate + ADP + phosphate + H(+). The catalysed reaction is L-glutamine + H2O = L-glutamate + NH4(+). The protein operates within purine metabolism; IMP biosynthesis via de novo pathway; 5-amino-1-(5-phospho-D-ribosyl)imidazole from N(2)-formyl-N(1)-(5-phospho-D-ribosyl)glycinamide: step 1/2. In terms of biological role, part of the phosphoribosylformylglycinamidine synthase complex involved in the purines biosynthetic pathway. Catalyzes the ATP-dependent conversion of formylglycinamide ribonucleotide (FGAR) and glutamine to yield formylglycinamidine ribonucleotide (FGAM) and glutamate. The FGAM synthase complex is composed of three subunits. PurQ produces an ammonia molecule by converting glutamine to glutamate. PurL transfers the ammonia molecule to FGAR to form FGAM in an ATP-dependent manner. PurS interacts with PurQ and PurL and is thought to assist in the transfer of the ammonia molecule from PurQ to PurL. The protein is Phosphoribosylformylglycinamidine synthase subunit PurQ of Mesorhizobium japonicum (strain LMG 29417 / CECT 9101 / MAFF 303099) (Mesorhizobium loti (strain MAFF 303099)).